Consider the following 364-residue polypeptide: MAQRWDPQRLAGGQPQDSHEDSTQSSIFTYTNSNATRGPFEGPNYHIAPRWVYHITSTWMIIVVIASVFTNGLVLVATMKFKKLRHPLNWILVNLAIADLAETVIASTISVVNQLYGYFVLGHPLCVVEGYTVSVCGITGLWSLAIISWERWLVVCKPFGNMRFDAKLAIVGIAFSWIWSAVWTAPPIFGWSRYWPYGLKTSCGPDVFSGTSYPGVQSYMMVLMVTCCIIPLSIIILCYLQVWLAIRAVAKQQKESESTQKAEKEVTRMVVVMVFAYCLCWGPYTFFACFATANPGYAFHPLVAALPAYFAKSATIYNPIIYVFMNRQFRNCILQLFGKKVDDTSELSSASKTEASSVSSVSPA.

Residues 1–24 (MAQRWDPQRLAGGQPQDSHEDSTQ) are disordered. Residues 1–52 (MAQRWDPQRLAGGQPQDSHEDSTQSSIFTYTNSNATRGPFEGPNYHIAPRWV) lie on the Extracellular side of the membrane. Residues 17 to 43 (DSHEDSTQSSIFTYTNSNATRGPFEGP) are required for 11-cis-retinal regeneration. N34 carries an N-linked (GlcNAc...) asparagine glycan. A helical membrane pass occupies residues 53–77 (YHITSTWMIIVVIASVFTNGLVLVA). Residues 78–89 (TMKFKKLRHPLN) lie on the Cytoplasmic side of the membrane. The helical transmembrane segment at 90 to 115 (WILVNLAIADLAETVIASTISVVNQL) threads the bilayer. Topologically, residues 116 to 129 (YGYFVLGHPLCVVE) are extracellular. A disulfide bridge links C126 with C203. Residues 130–149 (GYTVSVCGITGLWSLAIISW) form a helical membrane-spanning segment. Topologically, residues 150–168 (ERWLVVCKPFGNMRFDAKL) are cytoplasmic. The chain crosses the membrane as a helical span at residues 169–192 (AIVGIAFSWIWSAVWTAPPIFGWS). Residues 193–218 (RYWPYGLKTSCGPDVFSGTSYPGVQS) lie on the Extracellular side of the membrane. Residues 219–246 (YMMVLMVTCCIIPLSIIILCYLQVWLAI) form a helical membrane-spanning segment. The Cytoplasmic portion of the chain corresponds to 247–268 (RAVAKQQKESESTQKAEKEVTR). Residues 269–292 (MVVVMVFAYCLCWGPYTFFACFAT) form a helical membrane-spanning segment. At 293–300 (ANPGYAFH) the chain is on the extracellular side. A helical membrane pass occupies residues 301 to 320 (PLVAALPAYFAKSATIYNPI). K312 carries the N6-(retinylidene)lysine modification. The Cytoplasmic segment spans residues 321-364 (IYVFMNRQFRNCILQLFGKKVDDTSELSSASKTEASSVSSVSPA).

It belongs to the G-protein coupled receptor 1 family. Opsin subfamily. Monomer. Homodimer. Homotetramer. O-glycosylated. In terms of processing, phosphorylated on some or all of the serine and threonine residues present in the C-terminal region. In terms of tissue distribution, expressed in cone photoreceptor cells.

The protein localises to the membrane. Visual pigments are the light-absorbing molecules that mediate vision. They consist of an apoprotein, opsin, covalently linked to cis-retinal. May increase spectral sensitivity in dim light. This chain is Medium-wave-sensitive opsin 1 (OPN1MW), found in Sciurus carolinensis (Eastern gray squirrel).